Here is a 269-residue protein sequence, read N- to C-terminus: Undecaprenyl-diphosphatase (269 aa).

6 consecutive transmembrane segments (helical) span residues 43–63 (KGKVFEIVIQLGAILAVCWEY), 82–102 (FILNLFVAFLPAAIFGLLLHG), 108–128 (LFSSITVACALIVGGFAILLV), 188–208 (ATEFSFFLAIPVMLAATFYDV), 222–242 (MFAVGFITAFLAALVAIKTLI), and 249–269 (DFKGFAYYRIVLGIIVLAYYW).

The protein belongs to the UppP family.

It is found in the cell inner membrane. It carries out the reaction di-trans,octa-cis-undecaprenyl diphosphate + H2O = di-trans,octa-cis-undecaprenyl phosphate + phosphate + H(+). In terms of biological role, catalyzes the dephosphorylation of undecaprenyl diphosphate (UPP). Confers resistance to bacitracin. In Methylobacillus flagellatus (strain ATCC 51484 / DSM 6875 / VKM B-1610 / KT), this protein is Undecaprenyl-diphosphatase.